Here is a 280-residue protein sequence, read N- to C-terminus: UPF0494 membrane protein C750.06c (280 aa).

The next 4 helical transmembrane spans lie at 107–127, 144–164, 178–198, and 199–219; these read WPLL…KFEV, IWVP…SLIF, VIIA…GMII, and AALG…LYFG.

It belongs to the UPF0494 family.

The protein resides in the cytoplasm. It is found in the vacuole. The protein localises to the membrane. The chain is UPF0494 membrane protein C750.06c from Schizosaccharomyces pombe (strain 972 / ATCC 24843) (Fission yeast).